Consider the following 218-residue polypeptide: Ribosomal RNA small subunit methyltransferase G (218 aa).

S-adenosyl-L-methionine contacts are provided by residues Gly82, Leu87, 133–134, and Arg147; that span reads VE.

Belongs to the methyltransferase superfamily. RNA methyltransferase RsmG family.

It is found in the cytoplasm. The enzyme catalyses guanosine(527) in 16S rRNA + S-adenosyl-L-methionine = N(7)-methylguanosine(527) in 16S rRNA + S-adenosyl-L-homocysteine. Its function is as follows. Specifically methylates the N7 position of guanine in position 527 of 16S rRNA. This Leptothrix cholodnii (strain ATCC 51168 / LMG 8142 / SP-6) (Leptothrix discophora (strain SP-6)) protein is Ribosomal RNA small subunit methyltransferase G.